The chain runs to 64 residues: Large ribosomal subunit protein bL35 (64 aa).

The segment at 18-39 (GSGLVKHYPSNKHHKNTHKKEN) is disordered. Residues 26 to 39 (PSNKHHKNTHKKEN) are compositionally biased toward basic residues.

The protein belongs to the bacterial ribosomal protein bL35 family.

This Symbiobacterium thermophilum (strain DSM 24528 / JCM 14929 / IAM 14863 / T) protein is Large ribosomal subunit protein bL35.